We begin with the raw amino-acid sequence, 500 residues long: NAD(P)H-quinone oxidoreductase subunit 2 B, chloroplastic (500 aa).

The next 13 helical transmembrane spans lie at 14-34 (SILP…IDLT), 41-61 (WLYF…LFQL), 78-98 (FNGI…PLSM), 116-136 (LTAT…IIFI), 166-186 (LLMG…LYGL), 211-231 (ISIV…LVPF), 242-262 (APTS…LALA), 277-297 (WHLI…FIAI), 305-325 (MLAY…IAGD), 335-355 (YMLF…LFGL), 376-396 (ASFL…AGFF), 409-429 (GLYL…YYYL), and 467-487 (IIIC…VIAI).

The protein belongs to the complex I subunit 2 family. As to quaternary structure, NDH is composed of at least 16 different subunits, 5 of which are encoded in the nucleus.

It localises to the plastid. Its subcellular location is the chloroplast thylakoid membrane. The catalysed reaction is a plastoquinone + NADH + (n+1) H(+)(in) = a plastoquinol + NAD(+) + n H(+)(out). The enzyme catalyses a plastoquinone + NADPH + (n+1) H(+)(in) = a plastoquinol + NADP(+) + n H(+)(out). In terms of biological role, NDH shuttles electrons from NAD(P)H:plastoquinone, via FMN and iron-sulfur (Fe-S) centers, to quinones in the photosynthetic chain and possibly in a chloroplast respiratory chain. The immediate electron acceptor for the enzyme in this species is believed to be plastoquinone. Couples the redox reaction to proton translocation, and thus conserves the redox energy in a proton gradient. The protein is NAD(P)H-quinone oxidoreductase subunit 2 B, chloroplastic of Anthoceros angustus (Hornwort).